A 1460-amino-acid polypeptide reads, in one-letter code: Ankyrin repeat-containing protein kinase A (1460 aa).

Disordered regions lie at residues 1–32, 57–181, 216–259, 272–311, 329–354, 374–510, and 551–608; these read MSIK…NINI, IKQQ…HKSH, RENE…ASST, STSN…VEFD, SSPS…TSTS, FTPS…SSNP, and CPSA…SSIP. Low complexity-rich tracts occupy residues 8–32, 61–86, and 111–128; these read SNIN…NINI, SNNN…PTSH, and SSGS…NNNN. Polar residues predominate over residues 129 to 140; the sequence is QIKTSNGMNKPN. Over residues 149-162 the composition is skewed to basic and acidic residues; the sequence is KPRENSQNKIDDNK. Composition is skewed to low complexity over residues 220-259 and 272-300; these read NNNN…ASST and STSN…RSTS. Composition is skewed to polar residues over residues 329–345 and 384–404; these read SSPS…VHMP and PTNS…TIQP. The span at 405 to 422 shows a compositional bias: low complexity; that stretch reads SSLDSSSESVSDGLQSVS. Residues 423 to 434 are compositionally biased toward polar residues; sequence GSPVTASPSPTI. Positions 435-461 are enriched in low complexity; sequence SNNTNATTTNNNNNTNTNNNNNNNNNQ. Residues 462 to 472 are compositionally biased toward basic residues; the sequence is HNHHHHQHSHS. The interaction with 14-3-3 protein stretch occupies residues 467-667; sequence HQHSHSQQHD…IFRGCGIPLD (201 aa). The segment covering 486–497 has biased composition (low complexity); the sequence is PSSPTSPTLLPS. The segment at 499–551 adopts a Phorbol-ester/DAG-type zinc-finger fold; sequence THDFSSEYSSNPGGKCAICRKPLWSFPISDKSRRCRDCSLVVHRACVPLATEC. The segment covering 559-568 has biased composition (polar residues); it reads SKLSVPNGNQ. A compositionally biased stretch (low complexity) spans 569 to 608; sequence SNSSSSSSSSSSSSSSSNSSSSNTKGHSRTPSSPSVSSIP. The GRAM domain maps to 653 to 724; the sequence is RDFHFIFRGC…SNIASIEKRS (72 aa). ANK repeat units lie at residues 814-843, 852-883, 887-920, 924-955, and 959-988; these read SKEI…QVNS, KGYT…RVRE, DGNT…NINE, NGET…NVNI, and AGES…DPTI. The 264-residue stretch at 1112–1375 folds into the Protein kinase domain; it reads LEYTEKIGSG…ATEAMTALAV (264 aa). ATP-binding positions include 1118-1126 and lysine 1139; that span reads IGSGASGKV. Aspartate 1231 acts as the Proton acceptor in catalysis. The helical transmembrane segment at 1293–1313 threads the bilayer; sequence MGIVMWEIVYCVVYGCYMIPY. A coiled-coil region spans residues 1425 to 1460; the sequence is PEEEQIYQEAMEKQRRNQEASANRNQKNKELLNNNN. A disordered region spans residues 1434–1460; it reads AMEKQRRNQEASANRNQKNKELLNNNN.

The protein belongs to the protein kinase superfamily. TKL Ser/Thr protein kinase family.

It localises to the cytoplasm. Its subcellular location is the cytoskeleton. It is found in the membrane. The protein localises to the nucleus. It catalyses the reaction L-seryl-[protein] + ATP = O-phospho-L-seryl-[protein] + ADP + H(+). It carries out the reaction L-threonyl-[protein] + ATP = O-phospho-L-threonyl-[protein] + ADP + H(+). In terms of biological role, involved in the development of the fruiting body. Overexpression phenocopies the spnA null phenotype. The polypeptide is Ankyrin repeat-containing protein kinase A (arkA) (Dictyostelium discoideum (Social amoeba)).